The following is a 227-amino-acid chain: tRNA (guanine-N(7)-)-methyltransferase (227 aa).

4 residues coordinate S-adenosyl-L-methionine: Glu60, Glu85, Asp112, and Asp135. Asp135 is a catalytic residue. Residues Lys139, Asp171, and 206–209 (TKFE) each bind substrate.

It belongs to the class I-like SAM-binding methyltransferase superfamily. TrmB family.

The catalysed reaction is guanosine(46) in tRNA + S-adenosyl-L-methionine = N(7)-methylguanosine(46) in tRNA + S-adenosyl-L-homocysteine. It participates in tRNA modification; N(7)-methylguanine-tRNA biosynthesis. Functionally, catalyzes the formation of N(7)-methylguanine at position 46 (m7G46) in tRNA. The sequence is that of tRNA (guanine-N(7)-)-methyltransferase from Thiobacillus denitrificans (strain ATCC 25259 / T1).